The following is a 64-amino-acid chain: Translation machinery-associated protein 7 (64 aa).

Disordered regions lie at residues 1-38 (MSSRQGGKMKPLKQKKKQQQDLDPEDIAFKEKQKADAA) and 45-64 (ANMKSGKPLVGGGIKKSGKK). Residues 27–38 (IAFKEKQKADAA) are compositionally biased toward basic and acidic residues. Over residues 53–64 (LVGGGIKKSGKK) the composition is skewed to gly residues.

The protein belongs to the TMA7 family. As to quaternary structure, interacts with the 40S ribosomal subunit.

The protein localises to the cytoplasm. Its subcellular location is the nucleus. Involved in protein synthesis. The protein is Translation machinery-associated protein 7 (TMA7) of Saccharomyces cerevisiae (strain ATCC 204508 / S288c) (Baker's yeast).